Here is a 415-residue protein sequence, read N- to C-terminus: Gamma-glutamyl phosphate reductase (415 aa).

It belongs to the gamma-glutamyl phosphate reductase family.

It localises to the cytoplasm. It carries out the reaction L-glutamate 5-semialdehyde + phosphate + NADP(+) = L-glutamyl 5-phosphate + NADPH + H(+). It functions in the pathway amino-acid biosynthesis; L-proline biosynthesis; L-glutamate 5-semialdehyde from L-glutamate: step 2/2. Functionally, catalyzes the NADPH-dependent reduction of L-glutamate 5-phosphate into L-glutamate 5-semialdehyde and phosphate. The product spontaneously undergoes cyclization to form 1-pyrroline-5-carboxylate. This Mycolicibacterium vanbaalenii (strain DSM 7251 / JCM 13017 / BCRC 16820 / KCTC 9966 / NRRL B-24157 / PYR-1) (Mycobacterium vanbaalenii) protein is Gamma-glutamyl phosphate reductase.